Here is a 366-residue protein sequence, read N- to C-terminus: Zinc transporter ZIP13 (366 aa).

Topologically, residues 1–5 (MTKQK) are lumenal. The chain crosses the membrane as a helical span at residues 6–26 (LLLNGTFSLILIVACEAQQLP). The Cytoplasmic segment spans residues 27–57 (RSHAASSSGPLCEKEAESWGNLLSSERLDAW). A helical transmembrane segment spans residues 58-78 (ICSLIGSFMVGLSGIFPLLVI). Topologically, residues 79 to 97 (PFETGAALRSEAGSRRLKQ) are lumenal. A helical transmembrane segment spans residues 98-118 (LLSFAIGGLLGNVFLHLLPEA). The Cytoplasmic segment spans residues 119–137 (WAYTCSAAAGEGQSFQQQK). The helical transmembrane segment at 138–158 (LLGLWVIIGFLTFLALEKIFL) threads the bilayer. The Lumenal segment spans residues 159–225 (EKEEEECPGV…NRIKISGYLN (67 aa)). A disordered region spans residues 183–205 (SGYPPSKVAGKSQRAEKNSTQCN). The chain crosses the membrane as a helical span at residues 226–246 (LLANTIDNFTHGLAVAASFLV). The Cytoplasmic portion of the chain corresponds to 247-282 (SRKVGFLTTMAILLHEIPHEVGDFAILLRAGFDRWS). Residues 261 to 266 (HEIPHE) carry the XEXPHE-motif motif. Residues 283-303 (AAKMQLSTALGGIVGACFAIC) traverse the membrane as a helical segment. The Lumenal segment spans residues 304–313 (AQSPKGAGET). Residues 314–334 (VAWILPFTSGGFLYIALVNVV) form a helical membrane-spanning segment. Topologically, residues 335–343 (PDLLEEKNP) are cytoplasmic. A helical transmembrane segment spans residues 344–364 (WNSLQQILLLCTGITVMVLLA). Topologically, residues 365–366 (HN) are lumenal.

It belongs to the ZIP transporter (TC 2.A.5) family. Homodimer.

It localises to the golgi apparatus membrane. The protein resides in the cytoplasmic vesicle membrane. It is found in the endoplasmic reticulum membrane. The enzyme catalyses Zn(2+)(in) = Zn(2+)(out). Its function is as follows. Functions as a zinc transporter transporting Zn(2+) from the Golgi apparatus to the cytosol and thus influences the zinc level at least in areas of the cytosol. The polypeptide is Zinc transporter ZIP13 (Gallus gallus (Chicken)).